We begin with the raw amino-acid sequence, 475 residues long: Dihydrolipoyl dehydrogenase (475 aa).

Residues 37-46 (EQYYSLGGVC), K55, and A118 each bind FAD. A disulfide bond links C46 and C51. Residues 183–187 (GGGII), D206, V239, and 272–275 (AIGR) each bind NAD(+). D315 and A323 together coordinate FAD. H447 acts as the Proton acceptor in catalysis.

The protein belongs to the class-I pyridine nucleotide-disulfide oxidoreductase family. Homodimer. FAD serves as cofactor.

It localises to the cytoplasm. It carries out the reaction N(6)-[(R)-dihydrolipoyl]-L-lysyl-[protein] + NAD(+) = N(6)-[(R)-lipoyl]-L-lysyl-[protein] + NADH + H(+). Functionally, lipoamide dehydrogenase is a component of the alpha-ketoacid dehydrogenase complexes. This is Dihydrolipoyl dehydrogenase (lpdA) from Buchnera aphidicola subsp. Baizongia pistaciae (strain Bp).